Consider the following 274-residue polypeptide: Urease accessory protein UreD (274 aa).

This sequence belongs to the UreD family. In terms of assembly, ureD, UreF and UreG form a complex that acts as a GTP-hydrolysis-dependent molecular chaperone, activating the urease apoprotein by helping to assemble the nickel containing metallocenter of UreC. The UreE protein probably delivers the nickel.

It is found in the cytoplasm. Its function is as follows. Required for maturation of urease via the functional incorporation of the urease nickel metallocenter. The polypeptide is Urease accessory protein UreD (Lachnoclostridium phytofermentans (strain ATCC 700394 / DSM 18823 / ISDg) (Clostridium phytofermentans)).